Consider the following 380-residue polypeptide: GATOR1 complex protein NPRL2 (380 aa).

The tract at residues 1-133 is interaction with PDPK1; it reads MGSGCRIECI…SKQKLVPIMT (133 aa). Arg-78 provides a ligand contact to GDP. Arg-78 carries the post-translational modification Asymmetric dimethylarginine. Glycyl lysine isopeptide (Lys-Gly) (interchain with G-Cter in ubiquitin) cross-links involve residues Lys-158 and Lys-357.

Belongs to the NPR2 family. In terms of assembly, within the GATOR complex, component of the GATOR1 subcomplex, made of DEPDC5, NPRL2 and NPRL3. GATOR1 mediates the strong interaction of the GATOR complex with small GTPases Rag (RagA/RRAGA, RagB/RRAGB, RagC/RRAGC and/or RagD/RRAGD) heterodimers. GATOR1 interacts with GPR155/LYCHOS; interaction takes place in presence of cholesterol and prevents interaction between GATOR1 and KICSTOR. Interacts with PDPK1. Post-translationally, in the presence of abundant amino acids, ubiquitinated at Lys-158 and Lys-357 via 'Lys-6'-linked ubiquitination by the WDR24 component of the GATOR2 complex, thereby inhibiting the GATOR1 complex and promoting mTORC1 activation. In terms of processing, asymmetric dimethylation at Arg-78 by PRMT1 inhibits the GTPase activator activity of the GATOR1 complex and consequently inducing timely mTORC1 activation under methionine-sufficient conditions. In terms of tissue distribution, most abundant in skeletal muscle, followed by brain, liver and pancreas, with lower amounts in lung, kidney, placenta and heart. Expressed in the frontal lobe cortex as well as in the temporal, parietal, and occipital lobes. Expressed in most lung cancer cell lines tested.

It is found in the lysosome membrane. In terms of biological role, catalytic component of the GATOR1 complex, a multiprotein complex that functions as an inhibitor of the amino acid-sensing branch of the mTORC1 pathway. In response to amino acid depletion, the GATOR1 complex has GTPase activating protein (GAP) activity and strongly increases GTP hydrolysis by RagA/RRAGA (or RagB/RRAGB) within heterodimeric Rag complexes, thereby turning them into their inactive GDP-bound form, releasing mTORC1 from lysosomal surface and inhibiting mTORC1 signaling. In the presence of abundant amino acids, the GATOR1 complex is ubiquitinated and inhibited by GATOR2. Within the GATOR1 complex, NPRL2 constitutes the catalytic subunit that mediates the GTPase activator activity and under methionine-sufficient conditions, the GTPase activator activity is inhibited by PRMT1 through methylation and consequently inducing timely mTORC1 activation. Its function is as follows. Suppresses Src-dependent tyrosine phosphorylation and activation of PDPK1 and its downstream signaling. Down-regulates PDPK1 kinase activity by interfering with tyrosine phosphorylation at 'Tyr-9', 'Tyr-373' and 'Tyr-376' residues. May act as a tumor suppressor. Suppresses cell growth and enhances sensitivity to various anticancer drugs. The chain is GATOR1 complex protein NPRL2 from Homo sapiens (Human).